The chain runs to 440 residues: Thymidine phosphorylase (440 aa).

Belongs to the thymidine/pyrimidine-nucleoside phosphorylase family. As to quaternary structure, homodimer.

It carries out the reaction thymidine + phosphate = 2-deoxy-alpha-D-ribose 1-phosphate + thymine. It participates in pyrimidine metabolism; dTMP biosynthesis via salvage pathway; dTMP from thymine: step 1/2. In terms of biological role, the enzymes which catalyze the reversible phosphorolysis of pyrimidine nucleosides are involved in the degradation of these compounds and in their utilization as carbon and energy sources, or in the rescue of pyrimidine bases for nucleotide synthesis. The sequence is that of Thymidine phosphorylase from Burkholderia pseudomallei (strain 1106a).